Consider the following 425-residue polypeptide: 2,3-diketo-L-gulonate TRAP transporter large permease protein YiaN (425 aa).

Helical transmembrane passes span 3–23 (VLIF…IAWA), 54–74 (FSLL…AGGL), 93–113 (LGYV…SAVA), 139–159 (LIAS…FIIF), 170–190 (LFMA…LTWW), 209–229 (IWHS…IIGG), 235–255 (FTPT…ATVI), 277–297 (VVMF…IAEL), 314–334 (LLFI…DLTP), 355–375 (IYFG…PPIG), and 399–419 (YVLV…LIIL).

It belongs to the TRAP transporter large permease family. The complex comprises the extracytoplasmic solute receptor protein YiaO, and the two transmembrane proteins YiaM and YiaN.

The protein resides in the cell inner membrane. Its function is as follows. Part of the tripartite ATP-independent periplasmic (TRAP) transport system YiaMNO involved in the uptake of 2,3-diketo-L-gulonate. This is 2,3-diketo-L-gulonate TRAP transporter large permease protein YiaN (yiaN) from Escherichia coli (strain K12).